We begin with the raw amino-acid sequence, 519 residues long: MLSVLSINYRYYLMELIDFSSSVWSIVPALLAIILAIATRRVLVSLSAGIIIGSLMLSDWQIGSAFNYLVKNVVSLVYADGEINSNMNIVLFLLLLGVLTALLTVSGSNRAFAEWAQSRIKGRRGAKLLAASLVFVTFIDDYFHSLAVGAIARPVTDRFKVSRAKLAYILDSTAAPMCVMMPVSSWGAYIITLIGGLLATYSITEYTPIGAFVAMSSMNFYAIFSIIMVFFVAYFSFDIASMVRHEKLALKNTEDQLEEETGTKGQVRNLILPILVLIIATVSMMIYTGAEALAADGKVFSVLGTFENTVVGTSLVVGGFCSIIISTLLIILDRQVSVPEYVRSWIVGIKSMSGAIAILFFAWTINKIVGDMQTGKYLSSLVSGNIPMQFLPVILFVLGAAMAFSTGTSWGTFGIMLPIAAAMAANAAPELLLPCLSAVMAGAVCGDHCSPVSDTTILSSTGAKCNHIDHVTTQLPYAATVATATSIGYIVVGFTYSGLAGFAATAVSLIVIIFAVKKR.

The next 13 membrane-spanning stretches (helical) occupy residues 19–39 (FSSS…AIAT), 42–62 (VLVS…DWQI), 87–107 (MNIV…TVSG), 128–148 (LLAA…SLAV), 179–199 (VMMP…GLLA), 220–240 (FYAI…FDIA), 270–290 (LILP…YTGA), 311–331 (VGTS…LLII), 345–365 (WIVG…AWTI), 386–406 (IPMQ…AFST), 413–433 (FGIM…ELLL), 475–495 (LPYA…VGFT), and 496–516 (YSGL…IFAV).

The protein localises to the cell membrane. This is an uncharacterized protein from Haemophilus influenzae (strain ATCC 51907 / DSM 11121 / KW20 / Rd).